A 449-amino-acid chain; its full sequence is N-succinylarginine dihydrolase (449 aa).

Substrate is bound by residues Gly19–Ser28, Asn110, and His137–Arg138. Residues Tyr23–Arg43 form a disordered region. The span at Ala27 to Asn37 shows a compositional bias: low complexity. Glu174 is an active-site residue. Arg214 contacts substrate. His250 is a catalytic residue. 2 residues coordinate substrate: Asp252 and Asn365. The Nucleophile role is filled by Cys371.

It belongs to the succinylarginine dihydrolase family. In terms of assembly, homodimer.

It catalyses the reaction N(2)-succinyl-L-arginine + 2 H2O + 2 H(+) = N(2)-succinyl-L-ornithine + 2 NH4(+) + CO2. It participates in amino-acid degradation; L-arginine degradation via AST pathway; L-glutamate and succinate from L-arginine: step 2/5. Functionally, catalyzes the hydrolysis of N(2)-succinylarginine into N(2)-succinylornithine, ammonia and CO(2). In Pseudomonas putida (strain ATCC 47054 / DSM 6125 / CFBP 8728 / NCIMB 11950 / KT2440), this protein is N-succinylarginine dihydrolase.